The following is a 132-amino-acid chain: Large ribosomal subunit protein bL19 (132 aa).

The protein belongs to the bacterial ribosomal protein bL19 family.

This protein is located at the 30S-50S ribosomal subunit interface and may play a role in the structure and function of the aminoacyl-tRNA binding site. This is Large ribosomal subunit protein bL19 from Methylobacterium radiotolerans (strain ATCC 27329 / DSM 1819 / JCM 2831 / NBRC 15690 / NCIMB 10815 / 0-1).